A 177-amino-acid polypeptide reads, in one-letter code: MSEFVTVARPYAKAAFDFAVEHNSVERWQDMLAFAAEVTKNDQMAELLSGALAPETLSEAFIAICGEQLDENGQNLIKVMAENNRLKVLPDVLEQFIHLRAASEAIAEVEVISANQLSDEQLARIVSAMEKRLSRKVKLNCKIDKSVMAGIIIRAGDMVIDGSVRGRLERLADVLQS.

The protein belongs to the ATPase delta chain family. In terms of assembly, F-type ATPases have 2 components, F(1) - the catalytic core - and F(0) - the membrane proton channel. F(1) has five subunits: alpha(3), beta(3), gamma(1), delta(1), epsilon(1). F(0) has three main subunits: a(1), b(2) and c(10-14). The alpha and beta chains form an alternating ring which encloses part of the gamma chain. F(1) is attached to F(0) by a central stalk formed by the gamma and epsilon chains, while a peripheral stalk is formed by the delta and b chains.

Its subcellular location is the cell inner membrane. Functionally, f(1)F(0) ATP synthase produces ATP from ADP in the presence of a proton or sodium gradient. F-type ATPases consist of two structural domains, F(1) containing the extramembraneous catalytic core and F(0) containing the membrane proton channel, linked together by a central stalk and a peripheral stalk. During catalysis, ATP synthesis in the catalytic domain of F(1) is coupled via a rotary mechanism of the central stalk subunits to proton translocation. Its function is as follows. This protein is part of the stalk that links CF(0) to CF(1). It either transmits conformational changes from CF(0) to CF(1) or is implicated in proton conduction. The protein is ATP synthase subunit delta of Klebsiella pneumoniae subsp. pneumoniae (strain ATCC 700721 / MGH 78578).